The sequence spans 1488 residues: Chromosome partition protein MukB (1488 aa).

34 to 41 (GGNGAGKS) serves as a coordination point for ATP. Coiled coils occupy residues 326–418 (LEAD…QYNQ), 444–472 (LDTFQAKEQEATEKLLSLEQKMSVAQTAH), and 509–602 (RHLA…QRAP). The tract at residues 666-783 (PGGAEDQRLN…SLPIFGRAAR (118 aa)) is flexible hinge. Coiled-coil stretches lie at residues 835 to 923 (EAEI…AKLE), 977 to 1116 (EMLS…AKAG), and 1209 to 1265 (VEAI…LQSV). Residues 1049–1074 (ADSGAEERARQRRDELHAQLSNNRSR) are disordered. The span at 1051–1065 (SGAEERARQRRDELH) shows a compositional bias: basic and acidic residues.

Belongs to the SMC family. MukB subfamily. As to quaternary structure, homodimerization via its hinge domain. Binds to DNA via its C-terminal region. Interacts, and probably forms a ternary complex, with MukE and MukF via its C-terminal region. The complex formation is stimulated by calcium or magnesium. Interacts with tubulin-related protein FtsZ.

The protein localises to the cytoplasm. It is found in the nucleoid. Its function is as follows. Plays a central role in chromosome condensation, segregation and cell cycle progression. Functions as a homodimer, which is essential for chromosome partition. Involved in negative DNA supercoiling in vivo, and by this means organize and compact chromosomes. May achieve or facilitate chromosome segregation by condensation DNA from both sides of a centrally located replisome during cell division. The protein is Chromosome partition protein MukB of Salmonella schwarzengrund (strain CVM19633).